A 330-amino-acid polypeptide reads, in one-letter code: Neurogenic differentiation factor 4 (330 aa).

The segment at 1 to 79 (MTKTYTKAKE…RGPKKKKMTK (79 aa)) is disordered. Residues 25-35 (LSSKDELKAEN) are compositionally biased toward basic and acidic residues. A compositionally biased stretch (acidic residues) spans 52-64 (DSIEEEEEEEDDG). The span at 67 to 79 (PKRRGPKKKKMTK) shows a compositional bias: basic residues. The Nuclear localization signal motif lies at 73-79 (KKKKMTK). In terms of domain architecture, bHLH spans 87-139 (ARRVKANARERTRMHGLNDALDNLRRVMPCYSKTQKLSKIETLRLARNYIWAL). The leucine-zipper stretch occupies residues 162–183 (LSQPTSNLVAGCLQLGPQTLFL).

In terms of assembly, efficient DNA binding requires dimerization with another bHLH protein. In terms of processing, serine or threonine phosphorylation within the basic region may regulate neurogenic activity. Expressed in both the developing central nervous system and peripheral nervous system.

The protein resides in the nucleus. Functionally, probably acts as a transcriptional activator. Mediates neuronal differentiation. Required for the regulation of amacrine cell fate specification in the retina. The protein is Neurogenic differentiation factor 4 (NEUROD4) of Gallus gallus (Chicken).